We begin with the raw amino-acid sequence, 297 residues long: Formamidopyrimidine-DNA glycosylase (297 aa).

Pro-2 acts as the Schiff-base intermediate with DNA in catalysis. Glu-3 (proton donor) is an active-site residue. Catalysis depends on Lys-58, which acts as the Proton donor; for beta-elimination activity. DNA-binding residues include His-104, Arg-127, and Lys-170. Residues 261-297 (SVYDREGKPCRKEGCSGTIQRFVQGGRSTFYCPICQR) form an FPG-type zinc finger. Arg-287 (proton donor; for delta-elimination activity) is an active-site residue.

This sequence belongs to the FPG family. As to quaternary structure, monomer. Zn(2+) is required as a cofactor.

The enzyme catalyses Hydrolysis of DNA containing ring-opened 7-methylguanine residues, releasing 2,6-diamino-4-hydroxy-5-(N-methyl)formamidopyrimidine.. It carries out the reaction 2'-deoxyribonucleotide-(2'-deoxyribose 5'-phosphate)-2'-deoxyribonucleotide-DNA = a 3'-end 2'-deoxyribonucleotide-(2,3-dehydro-2,3-deoxyribose 5'-phosphate)-DNA + a 5'-end 5'-phospho-2'-deoxyribonucleoside-DNA + H(+). Functionally, involved in base excision repair of DNA damaged by oxidation or by mutagenic agents. Acts as a DNA glycosylase that recognizes and removes damaged bases. Has a preference for oxidized purines, such as 7,8-dihydro-8-oxoguanine (8-oxoG). Has AP (apurinic/apyrimidinic) lyase activity and introduces nicks in the DNA strand. Cleaves the DNA backbone by beta-delta elimination to generate a single-strand break at the site of the removed base with both 3'- and 5'-phosphates. This chain is Formamidopyrimidine-DNA glycosylase, found in Chelativorans sp. (strain BNC1).